Here is a 287-residue protein sequence, read N- to C-terminus: Lipoyl synthase (287 aa).

C34, C39, C45, C60, C64, C67, and S273 together coordinate [4Fe-4S] cluster. Residues 46–262 (WNKRHATVMI…KYIAYSKGFL (217 aa)) form the Radical SAM core domain.

The protein belongs to the radical SAM superfamily. Lipoyl synthase family. [4Fe-4S] cluster serves as cofactor.

It localises to the cytoplasm. The enzyme catalyses [[Fe-S] cluster scaffold protein carrying a second [4Fe-4S](2+) cluster] + N(6)-octanoyl-L-lysyl-[protein] + 2 oxidized [2Fe-2S]-[ferredoxin] + 2 S-adenosyl-L-methionine + 4 H(+) = [[Fe-S] cluster scaffold protein] + N(6)-[(R)-dihydrolipoyl]-L-lysyl-[protein] + 4 Fe(3+) + 2 hydrogen sulfide + 2 5'-deoxyadenosine + 2 L-methionine + 2 reduced [2Fe-2S]-[ferredoxin]. It functions in the pathway protein modification; protein lipoylation via endogenous pathway; protein N(6)-(lipoyl)lysine from octanoyl-[acyl-carrier-protein]: step 2/2. Catalyzes the radical-mediated insertion of two sulfur atoms into the C-6 and C-8 positions of the octanoyl moiety bound to the lipoyl domains of lipoate-dependent enzymes, thereby converting the octanoylated domains into lipoylated derivatives. The protein is Lipoyl synthase of Wolbachia pipientis wMel.